The chain runs to 219 residues: Holliday junction branch migration complex subunit RuvA (219 aa).

Residues 1-67 are domain I; that stretch reads MIGWLRGERI…DDGSSLFGFP (67 aa). The segment at 68-146 is domain II; that stretch reads DRRERDLFRV…AWSAEKNSDH (79 aa). The segment at 147-161 is flexible linker; the sequence is SDLSLVDRSDLKSLP. The domain III stretch occupies residues 162-219; the sequence is IEPDPLQDLQLTLSTLGYEDLEIRRAMRAVATGEEVPAANDGDGWLRASLRWLNRPSA.

The protein belongs to the RuvA family. In terms of assembly, homotetramer. Forms an RuvA(8)-RuvB(12)-Holliday junction (HJ) complex. HJ DNA is sandwiched between 2 RuvA tetramers; dsDNA enters through RuvA and exits via RuvB. An RuvB hexamer assembles on each DNA strand where it exits the tetramer. Each RuvB hexamer is contacted by two RuvA subunits (via domain III) on 2 adjacent RuvB subunits; this complex drives branch migration. In the full resolvosome a probable DNA-RuvA(4)-RuvB(12)-RuvC(2) complex forms which resolves the HJ.

It is found in the cytoplasm. The RuvA-RuvB-RuvC complex processes Holliday junction (HJ) DNA during genetic recombination and DNA repair, while the RuvA-RuvB complex plays an important role in the rescue of blocked DNA replication forks via replication fork reversal (RFR). RuvA specifically binds to HJ cruciform DNA, conferring on it an open structure. The RuvB hexamer acts as an ATP-dependent pump, pulling dsDNA into and through the RuvAB complex. HJ branch migration allows RuvC to scan DNA until it finds its consensus sequence, where it cleaves and resolves the cruciform DNA. This Synechococcus sp. (strain CC9311) protein is Holliday junction branch migration complex subunit RuvA.